The primary structure comprises 268 residues: Tropinone reductase homolog At2g29170 (268 aa).

22-46 (LVTGGSKGLGEAVVEELAMLGARVH) contributes to the NADP(+) binding site. Serine 155 provides a ligand contact to substrate. Tyrosine 168 serves as the catalytic Proton acceptor.

It belongs to the short-chain dehydrogenases/reductases (SDR) family. SDR65C subfamily.

This chain is Tropinone reductase homolog At2g29170, found in Arabidopsis thaliana (Mouse-ear cress).